A 69-amino-acid chain; its full sequence is Conotoxin Fr3.1 (69 aa).

The signal sequence occupies residues 1–20 (MLKTGVLLLIFLVLFPLATL). The propeptide occupies 21-51 (QDADQPVERNVENKQDLNLDKRRGMKLLAQR). The residue at position 52 (Q52) is a Pyrrolidone carboxylic acid. Position 54 is a 4-carboxyglutamate (E54). At P58 the chain carries 4-hydroxyproline.

The protein belongs to the conotoxin M superfamily. In terms of tissue distribution, expressed by the venom duct.

The protein resides in the secreted. Probable toxin. In Conus frigidus (Frigid cone), this protein is Conotoxin Fr3.1.